We begin with the raw amino-acid sequence, 317 residues long: Succinate receptor 1 (317 aa).

Residues 1–27 (MAQNLSCENWLALENILKKYYLSAFYG) lie on the Extracellular side of the membrane. Asn-4 carries an N-linked (GlcNAc...) asparagine glycan. A helical transmembrane segment spans residues 28-48 (IEFIVGMLGNFTVVFGYLFCM). The Cytoplasmic segment spans residues 49–55 (KNWNSSN). Residues 56–76 (VYLFNLSISDLAFLCTLPMLI) traverse the membrane as a helical segment. At 77–99 (RSYATGNWTYGDVLCISNRYVLH) the chain is on the extracellular side. A disulfide bond links Cys-91 and Cys-168. The helical transmembrane segment at 100 to 120 (ANLYTSILFLTFISIDRYLLM) threads the bilayer. At 121-133 (KFPFREHILQKKE) the chain is on the cytoplasmic side. A helical membrane pass occupies residues 134-154 (FAILISLAVWVLVTLEVLPML). The Extracellular portion of the chain corresponds to 155–181 (TFITSTPIEKGDSCVDYASSGNPKYSL). A helical transmembrane segment spans residues 182–202 (IYSLCLTLLGFLIPLSVMCFF). Residues 203–226 (YYKMVVFLKKRSQQQATVLSLNKP) are Cytoplasmic-facing. Residues 227-247 (LRLVVLAVVIFSVLFTPYHIM) traverse the membrane as a helical segment. Over 248–276 (RNVRIASRLDSWPQGCSQKAIKCLYILTR) the chain is Extracellular. The chain crosses the membrane as a helical span at residues 277–297 (PLAFLNSAVNPIFYFLVGDHF). Over 298-317 (RDMLFSKLRQYFKSLTSFRL) the chain is Cytoplasmic.

It belongs to the G-protein coupled receptor 1 family. In terms of tissue distribution, expressed in retina.

It is found in the cell membrane. G protein-coupled receptor for succinate able to mediate signaling through Gq/GNAQ or Gi/GNAI second messengers depending on the cell type and the processes regulated. Succinate-SUCNR1 signaling serves as a link between metabolic stress, inflammation and energy homeostasisn. In macrophages, plays a range of immune-regulatory roles. During inflammation, succinate-SUCNR1 signaling may act as an anti-inflammatory mediator or boost inflammation depending on the inflammatory status of cells. Hyperpolarizes M2 macrophages versus M1 phenotype through Gq signaling by regulating the transcription of genes involved in immune function. In activated M1 macrophages, plays a pro-inflammatory role in response to LPS. Expressed in dendritic cells, where it is involved in the sensing of immunological danger and enhances immunity. Mediates succinate triggered intracelleular calcium mobilization, induces migratory responses and acts in synergy with Toll-like receptor ligands for the production of proinflammatory cytokines as well as an enhancement of antigen-specific activation of helper T cells. In the small intestine, mediates the activation of tuft cells by dietary succinate and triggers type 2 immunity. In adipocytes, plays an important role in the control of energy metabolism. In response to succinate, controls leptin expression in an AMPK-JNK-CEBPA-dependent as well as circadian clock-regulated manner. In muscle tissue, is expressed in non-muscle cells and coordinates muscle remodeling in response to the succinate produced during exercise training in a paracrine manner. In retina, acts as a mediator of vessel growth during retinal development. In response to succinate, regulates the production of angiogenic factors, including VEGF, by retinal ganglion neurons. The chain is Succinate receptor 1 (Sucnr1) from Rattus norvegicus (Rat).